Consider the following 88-residue polypeptide: Serine protease inhibitor Kazal-type 11 (88 aa).

Residues 1–24 form the signal peptide; sequence MSSTWIKFLFILTLVLLPYFVAES. Residues 32 to 87 enclose the Kazal-like domain; it reads LRKVPNCTLYKSESDCSRTLIPVCADNQMTYYNACYFCLEQLVSPIKYKYHGICTK. Asn-37 is a glycosylation site (N-linked (GlcNAc...) asparagine). Cystine bridges form between Cys-38-Cys-69, Cys-47-Cys-66, and Cys-55-Cys-85.

As to expression, expressed in epydiymis, in the caput. Also expressed in seminal vesicles.

It is found in the secreted. Probable serine protease inhibitor. The chain is Serine protease inhibitor Kazal-type 11 (Spink11) from Mus musculus (Mouse).